The primary structure comprises 317 residues: tRNA dimethylallyltransferase (317 aa).

14–21 serves as a coordination point for ATP; the sequence is GPTAVGKT. 16 to 21 lines the substrate pocket; that stretch reads TAVGKT. The interval 39–42 is interaction with substrate tRNA; sequence DSMQ.

The protein belongs to the IPP transferase family. Monomer. Requires Mg(2+) as cofactor.

The enzyme catalyses adenosine(37) in tRNA + dimethylallyl diphosphate = N(6)-dimethylallyladenosine(37) in tRNA + diphosphate. In terms of biological role, catalyzes the transfer of a dimethylallyl group onto the adenine at position 37 in tRNAs that read codons beginning with uridine, leading to the formation of N6-(dimethylallyl)adenosine (i(6)A). The chain is tRNA dimethylallyltransferase from Bacillus cereus (strain ATCC 10987 / NRS 248).